Consider the following 75-residue polypeptide: Signaling peptide TAXIMIN 1 (75 aa).

A signal peptide spans 1–29; sequence MCDGDCRPLGFLLGLPFAFLSLLLSIIGV.

Expressed in shoot apical meristems (SAM); mostly specific to the L1 layer in the center of the meristem but also detected in the L2 layer in organ primordia. Also observed in the vasculature of seedling roots.

It is found in the secreted. With respect to regulation, counteracted by the antibiotic cefotaxime during responses to light stress. Its function is as follows. Signaling peptide involved in the regulation of lateral organs separation, including fruits and leaves. Involved in the perception of and response to light stress via the control of sinapoyl-malate accumulation, a UV-B protecting compound. This is Signaling peptide TAXIMIN 1 from Arabidopsis thaliana (Mouse-ear cress).